A 118-amino-acid chain; its full sequence is Large ribosomal subunit protein uL18 (118 aa).

This sequence belongs to the universal ribosomal protein uL18 family. As to quaternary structure, part of the 50S ribosomal subunit; part of the 5S rRNA/L5/L18/L25 subcomplex. Contacts the 5S and 23S rRNAs.

Its function is as follows. This is one of the proteins that bind and probably mediate the attachment of the 5S RNA into the large ribosomal subunit, where it forms part of the central protuberance. The protein is Large ribosomal subunit protein uL18 of Campylobacter lari (strain RM2100 / D67 / ATCC BAA-1060).